The chain runs to 479 residues: Auxin transporter-like protein 1 (479 aa).

Residues 1-58 are Cytoplasmic-facing; the sequence is MLSEKQGEETMMSSLNETIELNEEREEEKGASPGSGFKNFLWHGGSVYDAWFSCASNQ. The chain crosses the membrane as a helical span at residues 59–76; the sequence is VAQVLLTLPYSFSQLGMI. The Extracellular portion of the chain corresponds to 77-78; the sequence is SG. The chain crosses the membrane as a helical span at residues 79-99; the sequence is IIFQVFYGLMGSWTAYLISIL. Residues 100–134 are Cytoplasmic-facing; it reads YVEYRSRKEKENVSFKNHVIQWFEVLEGLLGPYWK. Residues 135–155 form a helical membrane-spanning segment; it reads AIGLAFNCTFLLFGSVIQLIA. Residues 156–171 lie on the Extracellular side of the membrane; that stretch reads CASNIYYINDHLDKRT. A helical transmembrane segment spans residues 172-192; it reads WTYIFGACCATTVFIPSFHNY. At 193 to 195 the chain is on the cytoplasmic side; that stretch reads RIW. Residues 196 to 216 form a helical membrane-spanning segment; sequence SFLGLGMTTYTAWYMTIAAIV. Residues 217–231 are Extracellular-facing; the sequence is HGQVENVVHSGPKKM. The helical transmembrane segment at 232–252 threads the bilayer; it reads VWYFTGATNILYTFGGHAVTV. Topologically, residues 253–265 are cytoplasmic; sequence EIMHAMWKPQKFK. Residues 266 to 286 traverse the membrane as a helical segment; the sequence is AIYFFATLYVFTLTLPSAIAV. The Extracellular segment spans residues 287-313; that stretch reads YWAFGDQLLDHSNAFSLLPRNAWRDAG. A helical membrane pass occupies residues 314–334; it reads VILMLIHQFITFGFACTPLYF. The Cytoplasmic segment spans residues 335–355; it reads VWEKVIGMHDTKSIFLRALAR. A helical transmembrane segment spans residues 356 to 376; it reads LPVVIPIWFLAIIFPFFGPIN. Residue serine 377 is a topological domain, extracellular. Residues 378 to 398 traverse the membrane as a helical segment; the sequence is AVGALLVSFTVYVIPASAHML. Residues 399–421 lie on the Cytoplasmic side of the membrane; the sequence is TYRSASARQNAAEKLPKVIPSWT. The chain crosses the membrane as a helical span at residues 422–442; sequence LMYVINAFVVIWVTIVGFGFG. Residues 443 to 479 are Extracellular-facing; it reads GWASMTNFIKQVDTFGLFAKCYQCPPKLPASNHTMHH. A glycan (N-linked (GlcNAc...) asparagine) is linked at asparagine 474.

The protein belongs to the amino acid/polyamine transporter 2 family. Amino acid/auxin permease (AAAP) (TC 2.A.18.1) subfamily. In terms of tissue distribution, shoots and roots of nodulating plants. Higher levels in roots, flowers and stems, lower in nodules, leaves, petioles and shoot apices.

It is found in the cell membrane. Its function is as follows. Carrier protein involved in proton-driven auxin influx. Mediates the formation of auxin gradient from developing leaves (site of auxin biosynthesis) to tips by contributing to the loading of auxin in vascular tissues and facilitating acropetal (base to tip) auxin transport within inner tissues of the root apex, and basipetal (tip to base) auxin transport within outer tissues of the root apex. May be involved in lateral roots and nodules formation. The protein is Auxin transporter-like protein 1 (LAX1) of Medicago truncatula (Barrel medic).